We begin with the raw amino-acid sequence, 118 residues long: Basic leucine zipper transcriptional factor ATF-like 3 (118 aa).

The segment at 1–69 (MSQGPPAVSV…HESLEQENSV (69 aa)) is disordered. 2 positions are modified to phosphoserine: Ser-2 and Ser-24. Positions 28 to 91 (DDRKVRRREK…RHLSEVLKEH (64 aa)) constitute a bZIP domain. The interval 30-55 (RKVRRREKNRVAAQRSRKKQTQKADK) is basic motif. Over residues 51–69 (QKADKLHEEHESLEQENSV) the composition is skewed to basic and acidic residues. The tract at residues 56 to 84 (LHEEHESLEQENSVLRREISKLKEELRHL) is leucine-zipper.

This sequence belongs to the bZIP family. As to quaternary structure, heterodimer; heterodimerizes with JUN family proteins. Interacts with JUN. As to expression, highly expressed in CD8-alpha(+) classical dendritic cells (cDCs), with low to absent expression in other immune cells and non-immune tissues.

Its subcellular location is the nucleus. Functionally, AP-1 family transcription factor that controls the differentiation of CD8(+) thymic conventional dendritic cells in the immune system. Acts via the formation of a heterodimer with JUN family proteins that recognizes and binds DNA sequence 5'-TGA[CG]TCA-3' and regulates expression of target genes. Required for development of CD8-alpha(+) classical dendritic cells (cDCs) and related CD103(+) dendritic cells that cross-present antigens to CD8 T-cells and produce interleukin-12 (IL12) in response to pathogens. This chain is Basic leucine zipper transcriptional factor ATF-like 3 (Batf3), found in Mus musculus (Mouse).